The sequence spans 238 residues: uncharacterized protein (238 aa).

Residues 3 to 116 (RVIIVDDEQP…RLAKTLTRLS (114 aa)) form the Response regulatory domain. The residue at position 54 (aspartate 54) is a 4-aspartylphosphate. An HTH LytTR-type domain is found at 136 to 237 (IPCSGHNRIF…LKSLKEKLGI (102 aa)).

This is an uncharacterized protein from Yersinia pestis.